Reading from the N-terminus, the 170-residue chain is Transcriptional repressor NrdR (170 aa).

A zinc finger lies at 3–34; it reads CPFCGTQDTKVVDSRLVSEGAQVRRRRTCIHC. The ATP-cone domain occupies 49 to 139; it reads PKLIKSDGSR…VYRSFKDISE (91 aa). The interval 151-170 is disordered; sequence SVSIPKSKKTAPESKKEDQA. Positions 160-170 are enriched in basic and acidic residues; it reads TAPESKKEDQA.

It belongs to the NrdR family. The cofactor is Zn(2+).

Functionally, negatively regulates transcription of bacterial ribonucleotide reductase nrd genes and operons by binding to NrdR-boxes. The sequence is that of Transcriptional repressor NrdR from Marinomonas sp. (strain MWYL1).